Here is a 323-residue protein sequence, read N- to C-terminus: MELFKRTRILSFMRYSNYGVIVSAILALLALGLLFFKGFSLGIDFAGGSLVQVRYTQNAPIKEVRDLFEKEARFKGVQVSEFGSKEEILIKFPFVETAENEDLNAIVANILKPSGDFEIRKFDTVGPRVGSELKEKGILSLILALIAIMVYVSFRYEWRFALASVIALVHDVILVASSVIVFKIDMNLEVIAALLTLIGYSINDTIIIFDRIREEMLSQKTKNATQAIDEAISSTLTRTLLTSLTVFFVVLILCVFGSKIIIGFSLPMLIGTIVGTYSSIFIAPKVALLLGFDMDKYYENETRKIKKAQEKEKMRRLYESGQV.

A run of 6 helical transmembrane segments spans residues 19–39 (GVIVSAILALLALGLLFFKGF), 138–158 (ILSLILALIAIMVYVSFRYEW), 162–182 (LASVIALVHDVILVASSVIVF), 189–209 (EVIAALLTLIGYSINDTIIIF), 244–264 (LTVFFVVLILCVFGSKIIIGF), and 269–289 (LIGTIVGTYSSIFIAPKVALL).

The protein belongs to the SecD/SecF family. SecF subfamily. As to quaternary structure, forms a complex with SecD. Part of the essential Sec protein translocation apparatus which comprises SecA, SecYEG and auxiliary proteins SecDF-YajC and YidC.

Its subcellular location is the cell inner membrane. Functionally, part of the Sec protein translocase complex. Interacts with the SecYEG preprotein conducting channel. SecDF uses the proton motive force (PMF) to complete protein translocation after the ATP-dependent function of SecA. In Helicobacter pylori (strain ATCC 700392 / 26695) (Campylobacter pylori), this protein is Protein translocase subunit SecF.